Consider the following 690-residue polypeptide: Eukaryotic translation initiation factor 3 subunit B (690 aa).

Residues 1-11 (MAKKKSEEHSG) show a composition bias toward basic and acidic residues. Positions 1-36 (MAKKKSEEHSGADANDSDYQEEPNFEDPPGFVDNIS) are disordered. Residues 15-25 (NDSDYQEEPNF) are compositionally biased toward acidic residues. Residues 57 to 141 (SVVVVDNIPK…HTFAVNLFTD (85 aa)) enclose the RRM domain. WD repeat units follow at residues 207–246 (TRERFTDTFVKWSPLGTYVVTFHKPGVAIWGGSSFQKIQK), 293–331 (DGMSVLSMFRWSHDDKFVARMGENSIHIYETPSFYLLDL), 334–369 (IKIPGIRGFSWSPTDNVIAYWVEEQNQIPARVTLME), 442–484 (EIRE…KPSL), and 530–575 (PDHF…IKRT). Residues 595-645 (EEKQKEIKKNLKKYYAAFEQKDRLRLTRASKELLEKRSQLRETFMEYRNKR) are a coiled coil.

It belongs to the eIF-3 subunit B family. Component of the eukaryotic translation initiation factor 3 (eIF-3) complex. The eIF-3 complex interacts with pix. Interacts with mxt.

Its subcellular location is the cytoplasm. Functionally, RNA-binding component of the eukaryotic translation initiation factor 3 (eIF-3) complex, which is involved in protein synthesis of a specialized repertoire of mRNAs and, together with other initiation factors, stimulates binding of mRNA and methionyl-tRNAi to the 40S ribosome. The eIF-3 complex specifically targets and initiates translation of a subset of mRNAs involved in cell proliferation. The chain is Eukaryotic translation initiation factor 3 subunit B from Drosophila simulans (Fruit fly).